The chain runs to 264 residues: Thymidylate synthase (264 aa).

R21 serves as a coordination point for dUMP. H51 is a binding site for (6R)-5,10-methylene-5,6,7,8-tetrahydrofolate. Residue 126-127 (RR) coordinates dUMP. C146 (nucleophile) is an active-site residue. DUMP contacts are provided by residues 166–169 (RSAD), N177, and 207–209 (HIY). Position 169 (D169) interacts with (6R)-5,10-methylene-5,6,7,8-tetrahydrofolate. A263 contributes to the (6R)-5,10-methylene-5,6,7,8-tetrahydrofolate binding site.

It belongs to the thymidylate synthase family. Bacterial-type ThyA subfamily. As to quaternary structure, homodimer.

It is found in the cytoplasm. It catalyses the reaction dUMP + (6R)-5,10-methylene-5,6,7,8-tetrahydrofolate = 7,8-dihydrofolate + dTMP. It participates in pyrimidine metabolism; dTTP biosynthesis. Functionally, catalyzes the reductive methylation of 2'-deoxyuridine-5'-monophosphate (dUMP) to 2'-deoxythymidine-5'-monophosphate (dTMP) while utilizing 5,10-methylenetetrahydrofolate (mTHF) as the methyl donor and reductant in the reaction, yielding dihydrofolate (DHF) as a by-product. This enzymatic reaction provides an intracellular de novo source of dTMP, an essential precursor for DNA biosynthesis. This is Thymidylate synthase from Cupriavidus metallidurans (strain ATCC 43123 / DSM 2839 / NBRC 102507 / CH34) (Ralstonia metallidurans).